Here is a 217-residue protein sequence, read N- to C-terminus: Putative threonylcarbamoyl-AMP synthase (217 aa).

A YrdC-like domain is found at 14-199 (SRGIVSAVGA…TPRVLRPGPV (186 aa)).

It belongs to the SUA5 family.

Its subcellular location is the cytoplasm. It carries out the reaction L-threonine + hydrogencarbonate + ATP = L-threonylcarbamoyladenylate + diphosphate + H2O. In terms of biological role, required for the formation of a threonylcarbamoyl group on adenosine at position 37 (t(6)A37) in tRNAs that read codons beginning with adenine. Catalyzes the conversion of L-threonine, HCO(3)(-)/CO(2) and ATP to give threonylcarbamoyl-AMP (TC-AMP) as the acyladenylate intermediate, with the release of diphosphate. In Mycobacterium tuberculosis (strain CDC 1551 / Oshkosh), this protein is Putative threonylcarbamoyl-AMP synthase.